The primary structure comprises 368 residues: MPLMGRKIKVLVVDDSAFMRKVLKDIINSDPELEVCGEARDGIEAIEMVQKCRPDVVTLDVEMPRMNGLDALRVIMKRYPVPVIMISALTQEGADATIKALEYGAIDFIPKPSSSISINMKELKDEIIAKIKEAAKVPRRFLELRRIRLLRVQKAKKVKPSVPARIAVAIAASTGGPQSLLKIFPKFPEDLKAGILLVQHMPPGFTRSFAKRLDSVSKIDVKEAEEGDVVEEGKAYVAPGDYHMEVTLRAGKPVITLNKKPKIHGVRPAADPMMITAAQVFGRRTVGVVMTGMGRDGAQGIVEIKKKGGITIAQDEKTSIIFGMPKAAIETGMVDYVVPLEKIPETVVKAVEIIRGGGNLGRHVTISR.

In terms of domain architecture, Response regulatory spans 9-126; the sequence is KVLVVDDSAF…SINMKELKDE (118 aa). Asp-60 carries the post-translational modification 4-aspartylphosphate. A CheB-type methylesterase domain is found at 161–354; the sequence is SVPARIAVAI…ETVVKAVEII (194 aa). Active-site residues include Ser-173, His-200, and Asp-296.

The protein belongs to the CheB family. In terms of processing, phosphorylated by CheA. Phosphorylation of the N-terminal regulatory domain activates the methylesterase activity.

The protein resides in the cytoplasm. It catalyses the reaction [protein]-L-glutamate 5-O-methyl ester + H2O = L-glutamyl-[protein] + methanol + H(+). The enzyme catalyses L-glutaminyl-[protein] + H2O = L-glutamyl-[protein] + NH4(+). Functionally, involved in chemotaxis. Part of a chemotaxis signal transduction system that modulates chemotaxis in response to various stimuli. Catalyzes the demethylation of specific methylglutamate residues introduced into the chemoreceptors (methyl-accepting chemotaxis proteins or MCP) by CheR. Also mediates the irreversible deamidation of specific glutamine residues to glutamic acid. This chain is Protein-glutamate methylesterase/protein-glutamine glutaminase, found in Pyrococcus horikoshii (strain ATCC 700860 / DSM 12428 / JCM 9974 / NBRC 100139 / OT-3).